Here is an 831-residue protein sequence, read N- to C-terminus: Heat shock 70 kDa protein 14 (831 aa).

Disordered regions lie at residues 503 to 579 (EEVE…KKKV) and 786 to 831 (TKPK…EGST). Basic and acidic residues predominate over residues 509–526 (VTKEHSEETTKMDSDKAS). Position 533 is a phosphoserine (Ser-533).

The protein belongs to the heat shock protein 70 (TC 1.A.33) family. HSP110/SSE subfamily. As to quaternary structure, interacts with HTT1 in both cytoplasm and nucleus. As to expression, constitutively expressed.

The protein resides in the cytoplasm. It localises to the nucleus. Its function is as follows. In cooperation with other chaperones, Hsp70s are key components that facilitate folding of de novo synthesized proteins, assist translocation of precursor proteins into organelles, and are responsible for degradation of damaged protein under stress conditions. The protein is Heat shock 70 kDa protein 14 (HSP70-14) of Arabidopsis thaliana (Mouse-ear cress).